Reading from the N-terminus, the 485-residue chain is NADH-quinone oxidoreductase subunit N (485 aa).

Helical transmembrane passes span Leu-8 to Ile-28, Phe-35 to Val-55, Gly-71 to Ala-91, Phe-105 to Leu-125, Ser-127 to Phe-147, Tyr-159 to Ala-179, Leu-203 to Phe-223, Pro-235 to Met-255, Val-271 to Gln-291, Leu-297 to Gln-317, Val-326 to Leu-346, Ala-373 to Ile-393, Trp-408 to Val-430, and Ile-455 to Ile-475.

Belongs to the complex I subunit 2 family. In terms of assembly, NDH-1 is composed of 13 different subunits. Subunits NuoA, H, J, K, L, M, N constitute the membrane sector of the complex.

It is found in the cell inner membrane. The catalysed reaction is a quinone + NADH + 5 H(+)(in) = a quinol + NAD(+) + 4 H(+)(out). NDH-1 shuttles electrons from NADH, via FMN and iron-sulfur (Fe-S) centers, to quinones in the respiratory chain. The immediate electron acceptor for the enzyme in this species is believed to be ubiquinone. Couples the redox reaction to proton translocation (for every two electrons transferred, four hydrogen ions are translocated across the cytoplasmic membrane), and thus conserves the redox energy in a proton gradient. In Shigella dysenteriae serotype 1 (strain Sd197), this protein is NADH-quinone oxidoreductase subunit N.